Consider the following 510-residue polypeptide: Hepatic triacylglycerol lipase (510 aa).

The signal sequence occupies residues 1–21; the sequence is MGNPLQISIFLVFCIFIQSSA. Residue N79 is glycosylated (N-linked (GlcNAc...) asparagine). Residue S169 is the Nucleophile of the active site. D195 (charge relay system) is an active-site residue. The segment at 255-278 is essential for determining substrate specificity; that stretch reads CHFLELYKHIAEHGLNAITQTIKC. H280 (charge relay system) is an active-site residue. Residues 353-487 enclose the PLAT domain; the sequence is YHYQFKIQFI…HPSQEKVFVN (135 aa). N398 is a glycosylation site (N-linked (GlcNAc...) asparagine).

Belongs to the AB hydrolase superfamily. Lipase family. As to quaternary structure, homodimer.

It localises to the secreted. It catalyses the reaction a triacylglycerol + H2O = a diacylglycerol + a fatty acid + H(+). The enzyme catalyses a 1-acyl-sn-glycero-3-phosphocholine + H2O = sn-glycerol 3-phosphocholine + a fatty acid + H(+). The catalysed reaction is a 1,2-diacyl-sn-glycero-3-phosphocholine + H2O = a 2-acyl-sn-glycero-3-phosphocholine + a fatty acid + H(+). It carries out the reaction 1,2,3-tri-(9Z-octadecenoyl)-glycerol + H2O = di-(9Z)-octadecenoylglycerol + (9Z)-octadecenoate + H(+). It catalyses the reaction 1,2-di-(9Z-octadecenoyl)-sn-glycero-3-phosphocholine + H2O = (9Z-octadecenoyl)-sn-glycero-3-phosphocholine + (9Z)-octadecenoate + H(+). The enzyme catalyses 1,2,3-tributanoylglycerol + H2O = dibutanoylglycerol + butanoate + H(+). The catalysed reaction is 1,2-dihexadecanoyl-sn-glycero-3-phosphocholine + H2O = hexadecanoyl-sn-glycero-3-phosphocholine + hexadecanoate + H(+). It carries out the reaction 1,2-di-(9Z-octadecenoyl)-sn-glycerol + H2O = 2-(9Z-octadecenoyl)-glycerol + (9Z)-octadecenoate + H(+). It catalyses the reaction 1,2,3-tri-(9Z-octadecenoyl)-glycerol + H2O = 2,3-di-(9Z)-octadecenoyl-sn-glycerol + (9Z)-octadecenoate + H(+). The enzyme catalyses 1-(9Z-octadecenoyl)-sn-glycero-3-phospho-L-serine + H2O = sn-glycero-3-phospho-L-serine + (9Z)-octadecenoate + H(+). The catalysed reaction is 1-hexadecanoyl-sn-glycero-3-phosphocholine + H2O = sn-glycerol 3-phosphocholine + hexadecanoate + H(+). It carries out the reaction 1,3-di-(9Z-octadecenoyl)-glycerol + H2O = 3-(9Z-octadecenoyl)-sn-glycerol + (9Z)-octadecenoate + H(+). Its function is as follows. Catalyzes the hydrolysis of triglycerides and phospholipids present in circulating plasma lipoproteins, including chylomicrons, intermediate density lipoproteins (IDL), low density lipoproteins (LDL) of large size and high density lipoproteins (HDL), releasing free fatty acids (FFA) and smaller lipoprotein particles. Also exhibits lysophospholipase activity. Can hydrolyze both neutral lipid and phospholipid substrates but shows a greater binding affinity for neutral lipid substrates than phospholipid substrates. In native LDL, preferentially hydrolyzes the phosphatidylcholine species containing polyunsaturated fatty acids at sn-2 position. The protein is Hepatic triacylglycerol lipase (Lipc) of Mus musculus (Mouse).